A 315-amino-acid polypeptide reads, in one-letter code: G-box-binding factor 1 (315 aa).

Disordered stretches follow at residues Met-1–Ser-56 and Met-93–Leu-268. Pro residues predominate over residues Pro-46–Ser-56. Polar residues-rich tracts occupy residues Gly-133–Gly-164 and Ala-178–Ile-187. The bZIP domain occupies Glu-222 to Ile-285. The basic motif stretch occupies residues Lys-224 to Lys-243. Polar residues predominate over residues Gln-249–Gln-262. A leucine-zipper region spans residues Leu-250 to Ile-285.

This sequence belongs to the bZIP family. In terms of assembly, monomer and heterodimers with BZIP16 and BZIP68. Interacts with GIP1. Phosphorylated by CK2. As to expression, found in both light and dark grown leaves.

It localises to the nucleus. Functionally, binds to the G-box motif (5'-CCACGTGG-3') of the rbcS-1A gene promoter. G-box and G-box-like motifs are cis-acting elements defined in promoters of certain plant genes which are regulated by such diverse stimuli as light-induction or hormone control. Binds to the G-box motif 5'-CACGTG-3' of LHCB2.4 (At3g27690) promoter. May act as transcriptional activator in light-regulated expression of LHCB2.4. Probably binds DNA as monomer. DNA-binding activity is redox-dependent. This chain is G-box-binding factor 1 (GBF1), found in Arabidopsis thaliana (Mouse-ear cress).